The following is a 115-amino-acid chain: MRIYINEIKLKDDGVYCFSEESTEGLEEVGQMLVDSDNYGFAYLLDDGQSYSYLIFVQETWSMLHENRDKRIIINNHLELKHFQEELDYVLNNIEGNNNYGKEFVSAVEKTFELE.

The protein belongs to the UPF0738 family.

The protein is UPF0738 protein SE_0694 of Staphylococcus epidermidis (strain ATCC 12228 / FDA PCI 1200).